The sequence spans 53 residues: ETSYTLNEVVPLKEFVPEWVRIGFSATTGAEFAAHEVLSWFFHSELAGTSSSN.

Belongs to the leguminous lectin family. As to quaternary structure, tetramer of two alpha and two beta chains.

This chain is Mannose/glucose-specific lectin alpha 1 chain, found in Lathyrus ochrus (Cyprus-vetch).